Consider the following 229-residue polypeptide: Potassium/proton antiporter CemA (229 aa).

A run of 4 helical transmembrane segments spans residues 7–27 (FTPL…SLSF), 114–134 (IICF…LVIL), 154–174 (ILLL…ELMV), and 189–209 (IISG…KYWI).

Belongs to the CemA family.

It is found in the plastid. Its subcellular location is the chloroplast inner membrane. It catalyses the reaction K(+)(in) + H(+)(out) = K(+)(out) + H(+)(in). Contributes to K(+)/H(+) antiport activity by supporting proton efflux to control proton extrusion and homeostasis in chloroplasts in a light-dependent manner to modulate photosynthesis. Prevents excessive induction of non-photochemical quenching (NPQ) under continuous-light conditions. Indirectly promotes efficient inorganic carbon uptake into chloroplasts. This chain is Potassium/proton antiporter CemA, found in Coffea arabica (Arabian coffee).